The sequence spans 310 residues: Cytochrome f (310 aa).

Positions 1 to 23 are cleaved as a signal peptide; sequence MRRLIPILLGSLVLSLSILVAPA. Positions 28, 48, 51, and 52 each coordinate heme. Residues 277 to 297 form a helical membrane-spanning segment; it reads IYGLLAFFVAVSLAQILLVLK.

The protein belongs to the cytochrome f family. In terms of assembly, the 4 large subunits of the cytochrome b6-f complex are cytochrome b6, subunit IV (17 kDa polypeptide, PetD), cytochrome f and the Rieske protein, while the 4 small subunits are PetG, PetL, PetM and PetN. The complex functions as a dimer. The cofactor is heme.

The protein resides in the cellular thylakoid membrane. In terms of biological role, component of the cytochrome b6-f complex, which mediates electron transfer between photosystem II (PSII) and photosystem I (PSI), cyclic electron flow around PSI, and state transitions. The sequence is that of Cytochrome f from Prochlorococcus marinus (strain MIT 9313).